The following is a 231-amino-acid chain: Large ribosomal subunit protein uL1 (231 aa).

It belongs to the universal ribosomal protein uL1 family. In terms of assembly, part of the 50S ribosomal subunit.

Its function is as follows. Binds directly to 23S rRNA. The L1 stalk is quite mobile in the ribosome, and is involved in E site tRNA release. In terms of biological role, protein L1 is also a translational repressor protein, it controls the translation of the L11 operon by binding to its mRNA. This is Large ribosomal subunit protein uL1 from Nitrosococcus oceani (strain ATCC 19707 / BCRC 17464 / JCM 30415 / NCIMB 11848 / C-107).